The sequence spans 491 residues: COP9 signalosome complex subunit 1 (491 aa).

A PCI domain is found at cysteine 269–glutamine 431. The segment at histidine 465–methionine 491 is disordered. Phosphoserine occurs at positions 468 and 474. Residues glycine 476–methionine 491 show a composition bias toward polar residues. Residue threonine 479 is modified to Phosphothreonine. At serine 483 the chain carries Phosphoserine.

The protein belongs to the CSN1 family. In terms of assembly, component of the CSN complex, composed of COPS1/GPS1, COPS2, COPS3, COPS4, COPS5, COPS6, COPS7 (COPS7A or COPS7B), COPS8 and COPS9 isoform 1. In the complex, it probably interacts directly with COPS2, COPS3, COPS4 and COPS5. Interacts directly with inositol kinase ITPK1. Interacts with CAPN8. Interacts with USP48. Interacts with ASB4; this interaction negatively regulates GPS1. In terms of tissue distribution, widely expressed.

Its subcellular location is the cytoplasm. The protein localises to the nucleus. Its function is as follows. Essential component of the COP9 signalosome complex (CSN), a complex involved in various cellular and developmental processes. The CSN complex is an essential regulator of the ubiquitin (Ubl) conjugation pathway by mediating the deneddylation of the cullin subunits of SCF-type E3 ligase complexes, leading to decrease the Ubl ligase activity of SCF-type complexes such as SCF, CSA or DDB2. The complex is also involved in phosphorylation of p53/TP53, c-jun/JUN, IkappaBalpha/NFKBIA, ITPK1 and IRF8/ICSBP, possibly via its association with CK2 and PKD kinases. CSN-dependent phosphorylation of TP53 and JUN promotes and protects degradation by the Ubl system, respectively. Suppresses G-protein- and mitogen-activated protein kinase-mediated signal transduction. This is COP9 signalosome complex subunit 1 (GPS1) from Homo sapiens (Human).